Here is a 243-residue protein sequence, read N- to C-terminus: UPF0758 protein Tery_2667 (243 aa).

The MPN domain occupies 113–235 (VVESPQAAAD…HSSLRQITNL (123 aa)). Residues His-184, His-186, and Asp-197 each coordinate Zn(2+). The JAMM motif motif lies at 184 to 197 (HNHPSGNVEPSPED).

Belongs to the UPF0758 family.

This Trichodesmium erythraeum (strain IMS101) protein is UPF0758 protein Tery_2667.